Here is a 353-residue protein sequence, read N- to C-terminus: S-adenosylmethionine:tRNA ribosyltransferase-isomerase (353 aa).

Belongs to the QueA family. Monomer.

Its subcellular location is the cytoplasm. It catalyses the reaction 7-aminomethyl-7-carbaguanosine(34) in tRNA + S-adenosyl-L-methionine = epoxyqueuosine(34) in tRNA + adenine + L-methionine + 2 H(+). It functions in the pathway tRNA modification; tRNA-queuosine biosynthesis. In terms of biological role, transfers and isomerizes the ribose moiety from AdoMet to the 7-aminomethyl group of 7-deazaguanine (preQ1-tRNA) to give epoxyqueuosine (oQ-tRNA). This is S-adenosylmethionine:tRNA ribosyltransferase-isomerase from Sodalis glossinidius (strain morsitans).